The following is a 161-amino-acid chain: MKFFAVLALCIVGAIASPLTADEASLVQSSWKAVSHNEVEILAAVFAAYPDIQNKFSQFAGKDLASIKDTGAFATHATRIVSFLSEVIALSGNTSNAAAVNSLVSKLGDDHKARGVSAAQFGEFRTALVAYLQANVSWGDNVAAAWNKALDNTFAIVVPRL.

Residues Met-1–Ala-16 form the signal peptide. The Globin domain occupies Pro-18–Leu-161. Heme b-binding residues include His-76 and His-111.

It belongs to the globin family. Homodimer.

This is Globin CTT-VIIB-5/CTT-VIIB-9 (CTT-7B5) from Chironomus thummi thummi (Midge).